We begin with the raw amino-acid sequence, 86 residues long: Large ribosomal subunit protein bL31B (86 aa).

The protein belongs to the bacterial ribosomal protein bL31 family. Type B subfamily. In terms of assembly, part of the 50S ribosomal subunit.

In Ralstonia pickettii (strain 12J), this protein is Large ribosomal subunit protein bL31B.